The sequence spans 550 residues: MKLDEEFLHDRDHSFLTDDEENQAALACSDDEHDGDDDGRRGGENSDSSSPLSRDRSDNNLSDVSNPPWPQSYRQSMDLLTGMTPPSVSFMPQSSSRRLASSFQKKQQSSFCDSLSSSSSKPLLSQPVPDKEETILPVNPQSQLKLSVTDLPLPEPNLCSFSQSVLNGTNVLCGLGLITMPYAIKESGWLGLPILLFFGVITCYTGVLMKRCLESSPGIQTYPDIGQAAFGITGRFIISILLYVELYAACVEYIIMMSDNLSGLFPNVSLSIASGISLDSPQIFAILTTLLVLPTVWLKDLSLLSYLSVGGVLASILLGICLFWVGAVDGIGFHATGRVFDLSNLPVTIGIFGFGYSGHSVFPNIYSSMKDPSRFPLVLVICFSFCTVLYIAVAVCGYTMFGEAVESQFTLNMPKHFFPSKVAVWTAVITPMTKYALTITPIVMSLEELIPTAKMRSRGVSILFRTMLVTSTLVVALSVPFFAIVAALIGSFLAMLVALIFPCLCYLSILKGKLSNTQIGLCIFIIVFGVVSGCCGTYSAISRLANQMTD.

Basic and acidic residues predominate over residues 1-16 (MKLDEEFLHDRDHSFL). The interval 1–99 (MKLDEEFLHD…FMPQSSSRRL (99 aa)) is disordered. Residues 84–99 (TPPSVSFMPQSSSRRL) are compositionally biased toward polar residues. The next 11 membrane-spanning stretches (helical) occupy residues 164 to 184 (SVLNGTNVLCGLGLITMPYAI), 189 to 209 (WLGLPILLFFGVITCYTGVLM), 236 to 256 (FIISILLYVELYAACVEYIIM), 264 to 286 (LFPNVSLSIASGISLDSPQIFAI), 308 to 328 (SVGGVLASILLGICLFWVGAV), 345 to 365 (LPVTIGIFGFGYSGHSVFPNI), 375 to 395 (FPLVLVICFSFCTVLYIAVAV), 424 to 444 (VWTAVITPMTKYALTITPIVM), 459 to 479 (GVSILFRTMLVTSTLVVALSV), 481 to 501 (FFAIVAALIGSFLAMLVALIF), and 521 to 541 (LCIFIIVFGVVSGCCGTYSAI).

The protein belongs to the amino acid/polyamine transporter 2 family. Amino acid/auxin permease (AAAP) (TC 2.A.18.5) subfamily.

It localises to the membrane. This Arabidopsis thaliana (Mouse-ear cress) protein is Amino acid transporter AVT1D.